Reading from the N-terminus, the 257-residue chain is Snake venom serine protease 3 (257 aa).

A signal peptide spans 1-18; it reads MVLIRVLANLLILQLSYA. Residues 19–24 constitute a propeptide that is removed on maturation; that stretch reads QKSSEL. Residues 25-248 form the Peptidase S1 domain; the sequence is VIGGDECNIN…YTDWIQNIIA (224 aa). Disulfide bonds link Cys-31–Cys-163, Cys-50–Cys-66, Cys-98–Cys-255, Cys-142–Cys-209, Cys-174–Cys-188, and Cys-199–Cys-224. Residue Asn-44 is glycosylated (N-linked (GlcNAc...) asparagine). His-65 functions as the Charge relay system in the catalytic mechanism. Asn-103 carries N-linked (GlcNAc...) asparagine glycosylation. Asp-110 functions as the Charge relay system in the catalytic mechanism. Residues Asn-117 and Asn-154 are each glycosylated (N-linked (GlcNAc...) asparagine). Residue Ser-203 is the Charge relay system of the active site. Asn-250 is a glycosylation site (N-linked (GlcNAc...) asparagine).

This sequence belongs to the peptidase S1 family. Snake venom subfamily. As to quaternary structure, monomer. In terms of tissue distribution, expressed by the venom gland.

It is found in the secreted. Functionally, snake venom serine protease that may act in the hemostasis system of the prey. The protein is Snake venom serine protease 3 (TLF3) of Protobothrops flavoviridis (Habu).